A 1113-amino-acid chain; its full sequence is Myosin-binding protein 1 (1113 aa).

The chain crosses the membrane as a helical span at residues 12–34 (LAFNEWLLMFMLFVNSIFSYVIA). The segment at 209 to 229 (ESEAVFSDTEPKQESSLNHLP) is disordered. A GTD-binding domain is found at 888 to 986 (SEGDRLKRQV…DLEAEIEYFR (99 aa)).

In terms of assembly, interacts with myosin XI-K, XI-I and XI-1. In terms of tissue distribution, expressed in leaf epidermal cells, roots and root hairs.

It is found in the endomembrane system. In terms of biological role, membrane-anchored myosin receptors that define a distinct, plant-specific transport vesicle compartment. The protein is Myosin-binding protein 1 of Arabidopsis thaliana (Mouse-ear cress).